A 646-amino-acid polypeptide reads, in one-letter code: bZIP transcription factor 39 (646 aa).

Over Met1–Lys311 the chain is Cytoplasmic. A disordered region spans residues His25–Asp172. Over residues Leu43–Asp53 the composition is skewed to low complexity. Over residues Phe59–Ser69 the composition is skewed to basic and acidic residues. The span at Glu71–Asn98 shows a compositional bias: low complexity. Positions Glu103–Arg113 are enriched in basic and acidic residues. A compositionally biased stretch (acidic residues) spans Asp159–Asp172. Residues Asp172–Leu232 form the bZIP domain. Positions Arg174–Lys205 are basic motif. A leucine-zipper region spans residues Ile211–Ile218. Residues Leu272 to Lys308 form a disordered region. Residues Lys279–Lys288 show a composition bias toward low complexity. Positions Lys291 to Ser303 are enriched in basic and acidic residues. The helical transmembrane segment at Val312 to Pro332 threads the bilayer. The Lumenal portion of the chain corresponds to Gly333–Asn646. Residues Asn371, Asn399, Asn525, Asn530, Asn565, and Asn571 are each glycosylated (N-linked (GlcNAc...) asparagine). Residues Thr560–Pro585 are disordered. A compositionally biased stretch (polar residues) spans Lys562–Pro585.

This sequence belongs to the bZIP family. Highly expressed in leaf blade, and at lower levels in roots, leaf sheaths, flowers and seeds.

It is found in the endoplasmic reticulum membrane. The protein localises to the nucleus. In terms of biological role, transcription factor involved in endoplasmic reticulum (ER) stress response. Acts as a ER stress sensor and activates the transcription factor BZIP50 and the chaperone BIP1. This is bZIP transcription factor 39 from Oryza sativa subsp. japonica (Rice).